The following is a 223-amino-acid chain: Sporulation-specific protein 19 (223 aa).

The signal sequence occupies residues 1–20 (MKKQILIVAAQSILCSTVFG). N198 carries GPI-anchor amidated asparagine lipidation. Positions 199–223 (ASNFLTPTTVALAVLLTILLFIQAY) are cleaved as a propeptide — removed in mature form.

The GPI-anchor is attached to the protein in the endoplasmic reticulum and serves to target the protein to the cell surface. There, the glucosamine-inositol phospholipid moiety is cleaved off and the GPI-modified mannoprotein is covalently attached via its lipidless GPI glycan remnant to the 1,6-beta-glucan of the outer cell wall layer.

The protein resides in the secreted. The protein localises to the cell wall. It localises to the membrane. Involved in sporulation. Essential for completion of the nuclear division. The protein is Sporulation-specific protein 19 (SPO19) of Saccharomyces cerevisiae (strain ATCC 204508 / S288c) (Baker's yeast).